The sequence spans 547 residues: 2-succinyl-5-enolpyruvyl-6-hydroxy-3-cyclohexene-1-carboxylate synthase (547 aa).

The protein belongs to the TPP enzyme family. MenD subfamily. As to quaternary structure, homodimer. Requires Mg(2+) as cofactor. Mn(2+) serves as cofactor. It depends on thiamine diphosphate as a cofactor.

The enzyme catalyses isochorismate + 2-oxoglutarate + H(+) = 5-enolpyruvoyl-6-hydroxy-2-succinyl-cyclohex-3-ene-1-carboxylate + CO2. It participates in quinol/quinone metabolism; 1,4-dihydroxy-2-naphthoate biosynthesis; 1,4-dihydroxy-2-naphthoate from chorismate: step 2/7. It functions in the pathway quinol/quinone metabolism; menaquinone biosynthesis. Catalyzes the thiamine diphosphate-dependent decarboxylation of 2-oxoglutarate and the subsequent addition of the resulting succinic semialdehyde-thiamine pyrophosphate anion to isochorismate to yield 2-succinyl-5-enolpyruvyl-6-hydroxy-3-cyclohexene-1-carboxylate (SEPHCHC). This is 2-succinyl-5-enolpyruvyl-6-hydroxy-3-cyclohexene-1-carboxylate synthase from Mycobacterium sp. (strain KMS).